Here is a 224-residue protein sequence, read N- to C-terminus: Ribonuclease HII (224 aa).

Residues 1-210 (MKIGGIDEAG…VRKIEESIKA (210 aa)) form the RNase H type-2 domain. 3 residues coordinate a divalent metal cation: Asp-7, Glu-8, and Asp-105.

It belongs to the RNase HII family. The cofactor is Mn(2+). It depends on Mg(2+) as a cofactor.

It is found in the cytoplasm. It carries out the reaction Endonucleolytic cleavage to 5'-phosphomonoester.. Endonuclease that specifically degrades the RNA of RNA-DNA hybrids. This Pyrococcus furiosus (strain ATCC 43587 / DSM 3638 / JCM 8422 / Vc1) protein is Ribonuclease HII.